We begin with the raw amino-acid sequence, 446 residues long: Phosphoglucosamine mutase (446 aa).

Catalysis depends on Ser101, which acts as the Phosphoserine intermediate. Mg(2+)-binding residues include Ser101, Asp240, Asp242, and Asp244. At Ser101 the chain carries Phosphoserine.

The protein belongs to the phosphohexose mutase family. Mg(2+) serves as cofactor. Post-translationally, activated by phosphorylation.

The enzyme catalyses alpha-D-glucosamine 1-phosphate = D-glucosamine 6-phosphate. Functionally, catalyzes the conversion of glucosamine-6-phosphate to glucosamine-1-phosphate. The sequence is that of Phosphoglucosamine mutase from Coxiella burnetii (strain RSA 331 / Henzerling II).